A 246-amino-acid polypeptide reads, in one-letter code: Lipoprotein-releasing system ATP-binding protein LolD 1 (246 aa).

The ABC transporter domain maps to 6-244; that stretch reads LKLERIRKDL…ASVTNEAASL (239 aa). Residue 43–50 participates in ATP binding; the sequence is GPSGSGKS.

This sequence belongs to the ABC transporter superfamily. Lipoprotein translocase (TC 3.A.1.125) family. As to quaternary structure, the complex is composed of two ATP-binding proteins (LolD) and two transmembrane proteins (LolC and LolE).

The protein resides in the cell inner membrane. In terms of biological role, part of the ABC transporter complex LolCDE involved in the translocation of mature outer membrane-directed lipoproteins, from the inner membrane to the periplasmic chaperone, LolA. Responsible for the formation of the LolA-lipoprotein complex in an ATP-dependent manner. This Chlorobium chlorochromatii (strain CaD3) protein is Lipoprotein-releasing system ATP-binding protein LolD 1.